The following is a 242-amino-acid chain: Tryptophan synthase alpha chain (242 aa).

Active-site proton acceptor residues include Glu-31 and Asp-42.

This sequence belongs to the TrpA family. In terms of assembly, tetramer of two alpha and two beta chains.

It catalyses the reaction (1S,2R)-1-C-(indol-3-yl)glycerol 3-phosphate + L-serine = D-glyceraldehyde 3-phosphate + L-tryptophan + H2O. Its pathway is amino-acid biosynthesis; L-tryptophan biosynthesis; L-tryptophan from chorismate: step 5/5. The alpha subunit is responsible for the aldol cleavage of indoleglycerol phosphate to indole and glyceraldehyde 3-phosphate. In Staphylococcus aureus (strain Mu3 / ATCC 700698), this protein is Tryptophan synthase alpha chain.